A 378-amino-acid chain; its full sequence is Metalloendoproteinase 2-MMP (378 aa).

The first 20 residues, 1–20, serve as a signal peptide directing secretion; that stretch reads MRFCVFGFLSLFLIVSPASA. Residues 21–154 constitute a propeptide, activation peptide; sequence WFFPNSTAVP…SRTHLHAVKR (134 aa). 5 N-linked (GlcNAc...) asparagine glycosylation sites follow: asparagine 25, asparagine 35, asparagine 46, asparagine 79, and asparagine 102. The Cysteine switch motif lies at 118 to 125; it reads PRCGNPDV. Cysteine 120 is a Zn(2+) binding site. 3 N-linked (GlcNAc...) asparagine glycosylation sites follow: asparagine 127, asparagine 143, and asparagine 203. Histidine 280 serves as a coordination point for Zn(2+). The active site involves glutamate 281. Histidine 284 and histidine 290 together coordinate Zn(2+). The N-linked (GlcNAc...) asparagine glycan is linked to asparagine 330. Serine 349 is lipidated: GPI-anchor amidated serine. The propeptide at 350–378 is removed in mature form; that stretch reads AAWRIDGSSRSTIVSLLLSTVGLVLWFLP.

The protein belongs to the peptidase M10A family. Matrix metalloproteinases (MMPs) subfamily. Zn(2+) is required as a cofactor. In terms of tissue distribution, mostly expressed in roots, and, to a lower extent, in flowers, leaves and stems.

Its subcellular location is the cell membrane. Its activity is regulated as follows. Repressed by acetohydroxamic acid (AHA). In terms of biological role, matrix metalloproteinases (MMPs) or matrixins may play a role in the degradation and remodeling of the extracellular matrix (ECM) during development or in response to stresses. Required for plant growth, morphogenesis, and development with particular relevance for flowering and senescence. Active on McaPLGLDpaAR-NH(2) (QF24) and myelin basic protein (MBP) and, to some extent, on beta-casein. This chain is Metalloendoproteinase 2-MMP, found in Arabidopsis thaliana (Mouse-ear cress).